Here is a 525-residue protein sequence, read N- to C-terminus: Nuclear polyadenylated RNA-binding protein NAB2 (525 aa).

2 disordered regions span residues 102-160 (SDIA…QLQP) and 196-236 (QFAP…STRF). The span at 103–160 (DIAQQQQQQQQQQQPDIAQQQPQQQPQQQPQQQPQQQPQQQPQQQPQQQPQQQPQLQP) shows a compositional bias: low complexity. Tandem repeats lie at residues 121–124 (QQQP), 125–128 (QQQP), 129–132 (QQQP), 133–136 (QQQP), 137–140 (QQQP), 141–144 (QQQP), 145–148 (QQQP), 149–152 (QQQP), and 153–156 (QQQP). The tract at residues 121 to 156 (QQQPQQQPQQQPQQQPQQQPQQQPQQQPQQQPQQQP) is 10 X 4 AA tandem repeats of Q-Q-Q-P. The 10; approximate repeat unit spans residues 157-160 (QLQP). 2 positions are modified to omega-N-methylarginine: Arg209 and Arg222. The segment at 209-228 (RGGGAVGKNRRGGRGGNRGG) is RNA-binding RGG-box. The interval 209-239 (RGGGAVGKNRRGGRGGNRGGRNNNSTRFNPL) is PY-NLS nuclear localization signal. Thr254 is subject to Phosphothreonine. 7 consecutive C3H1-type zinc fingers follow at residues 262-278 (CRLFPHCPLGRSCPHAH), 283-300 (CNEYPNCPKPPGTCEFLH), 340-355 (CKFGALCSNPSCPFGH), 371-386 (CDKNLTCDNPECRKAH), 415-430 (CKFGTHCTNKRCKYRH), 437-452 (CREGANCTRIDCLFGH), and 458-473 (CRFGVNCKNIYCLFRH). Residues 503–525 (NAIIENAPPQTSFTHQEQDTEMN) form a disordered region. Polar residues predominate over residues 510 to 525 (PPQTSFTHQEQDTEMN).

The protein belongs to the ZC3H14 family. As to quaternary structure, interacts with MLP1. Interacts with PUB1. Methylated by HMT1.

It localises to the nucleus. It is found in the cytoplasm. Functionally, RNA-binding protein involved in RNA processing and transcription regulation. Acts as a regulator of mRNA stability: binds the poly(A) tail of mRNAs and pre-mRNAs, preventing their degradation by the exosome. Involved in the biogenesis of circular RNAs (circRNAs) which are produced by back-splicing circularization of pre-mRNAs. Involved in mRNA poly(A) tail length control and nuclear export. Functions in surveillance and the packaging leading to generation of export-competent mRNPs. Controls both mRNP compaction that facilitates movement through nuclear pore complexes and the length of transcript poly(A) tails. Also acts as a regulator of transcription. Associates directly with nascent RNA polymerase II transcripts and remains associated during subsequent nuclear RNA processing reactions. Required for RNA polymerase III (RNAPIII) transcription: required for the occupancy of RNAPIII and Transcription factor IIIB (TFIIIB) at target genes, possibly via direct association with nascent RNAPIII transcripts. The polypeptide is Nuclear polyadenylated RNA-binding protein NAB2 (Saccharomyces cerevisiae (strain ATCC 204508 / S288c) (Baker's yeast)).